A 170-amino-acid chain; its full sequence is Adenine phosphoribosyltransferase (170 aa).

It belongs to the purine/pyrimidine phosphoribosyltransferase family. As to quaternary structure, homodimer.

Its subcellular location is the cytoplasm. It catalyses the reaction AMP + diphosphate = 5-phospho-alpha-D-ribose 1-diphosphate + adenine. Its pathway is purine metabolism; AMP biosynthesis via salvage pathway; AMP from adenine: step 1/1. In terms of biological role, catalyzes a salvage reaction resulting in the formation of AMP, that is energically less costly than de novo synthesis. This chain is Adenine phosphoribosyltransferase, found in Acaryochloris marina (strain MBIC 11017).